The following is an 864-amino-acid chain: Mitochondrial 15S rRNA processing factor CCM1 (864 aa).

A mitochondrion-targeting transit peptide spans 1–76 (MYMARCGPKN…REFSNTLKER (76 aa)). PPR repeat units lie at residues 319–353 (NKQN…STKH) and 356–390 (DICT…NIKP).

It belongs to the CCM1 family. Binds to mitochondrial small subunit 15S rRNA.

Its subcellular location is the mitochondrion. Its function is as follows. Regulates mitochondrial small subunit maturation by controlling 15S rRNA 5'-end processing. Localizes to the 5' precursor of the 15S rRNA in a position that is subsequently occupied by mS47 in the mature yeast mtSSU. Uses structure and sequence-specific RNA recognition, binding to a single-stranded region of the precursor and specifically recognizing bases -6 to -1. The exchange of Ccm1 for mS47 is coupled to the irreversible removal of precursor rRNA that is accompanied by conformational changes of the mitoribosomal proteins uS5m and mS26. These conformational changes signal completion of 5'-end rRNA processing through protection of the mature 5'-end of the 15S rRNA and stabilization of mS47. The removal of the 5' precursor together with the dissociation of Ccm1 may be catalyzed by the 5'-3' exoribonuclease Pet127. Involved in the specific removal of group I introns in mitochondrial encoded transcripts. In Saccharomyces cerevisiae (strain YJM789) (Baker's yeast), this protein is Mitochondrial 15S rRNA processing factor CCM1 (CCM1).